Reading from the N-terminus, the 197-residue chain is Imidazoleglycerol-phosphate dehydratase (197 aa).

This sequence belongs to the imidazoleglycerol-phosphate dehydratase family.

It localises to the cytoplasm. The enzyme catalyses D-erythro-1-(imidazol-4-yl)glycerol 3-phosphate = 3-(imidazol-4-yl)-2-oxopropyl phosphate + H2O. It participates in amino-acid biosynthesis; L-histidine biosynthesis; L-histidine from 5-phospho-alpha-D-ribose 1-diphosphate: step 6/9. The sequence is that of Imidazoleglycerol-phosphate dehydratase from Marinobacter nauticus (strain ATCC 700491 / DSM 11845 / VT8) (Marinobacter aquaeolei).